The chain runs to 533 residues: Cytochrome P450 9e2 (533 aa).

Heme is bound at residue Cys475.

This sequence belongs to the cytochrome P450 family. Heme is required as a cofactor.

The protein localises to the endoplasmic reticulum membrane. It localises to the microsome membrane. The polypeptide is Cytochrome P450 9e2 (CYP9E2) (Blattella germanica (German cockroach)).